A 70-amino-acid chain; its full sequence is Large ribosomal subunit protein eL38 (70 aa).

It belongs to the eukaryotic ribosomal protein eL38 family.

This chain is Large ribosomal subunit protein eL38 (RpL38), found in Bombyx mori (Silk moth).